The sequence spans 254 residues: PF03932 family protein CutC (254 aa).

Belongs to the CutC family.

It localises to the cytoplasm. The protein is PF03932 family protein CutC of Yersinia pestis bv. Antiqua (strain Antiqua).